The sequence spans 567 residues: MGMAWIVLLLGAGAIIYNHVYRKRMYREIDRLEEWKINLMNRPVPDELAKVKQLNMTGETEQLFERWRQQWDDIVAVKLPNVEEQLFDAERLLDKYRYRQARRLLGQIADGLRRLEEEVHEIIHEVNELIGSEEQSRAEIEELRAAHREAKKALLAYRYTFGSAADLLDVRLTEAEKQFQRFAELTEAGNYLAARDVVLTLKEELGRLTAMMEEIPKLLGECQTSLPAQLAELADGYREMEERGYILDHLHMERTLQEKREKIEQCLAMIHELRIEEAKQIVAELKEEIDALYDLLENEVLAHQYVQTEMPRLSGMLQELAAEAKETEAEALFVQQSYHLAPSDLEKYRSIEKQLHQLQKRFFLIQDRVAEAKTAYSLLKEELEQLVSQIDLMKEEHEQFRTMLQTLRKDELIAREKLDGMRKTLAEALRLVQKSRLPGLPEPYALELAEARRSLQAVAARLEEKPLDMPAVDQALEEAKAAVERLYERTVEMIEQATLAERTIQYGNRYRRRYPAVRKGLEEAEFLFRHYDYEEALRQAVAAVEEVEPGAFDRVQKLWQEDNSREQ.

Residues 1–2 lie on the Extracellular side of the membrane; it reads MG. Residues 3-21 form a helical membrane-spanning segment; that stretch reads MAWIVLLLGAGAIIYNHVY. At 22-567 the chain is on the cytoplasmic side; the sequence is RKRMYREIDR…LWQEDNSREQ (546 aa). Coiled coils occupy residues 98-159 and 251-497; these read YRQA…AYRY and HMER…IEQA.

This sequence belongs to the EzrA family.

It is found in the cell membrane. Its function is as follows. Negative regulator of FtsZ ring formation; modulates the frequency and position of FtsZ ring formation. Inhibits FtsZ ring formation at polar sites. Interacts either with FtsZ or with one of its binding partners to promote depolymerization. This is Septation ring formation regulator EzrA from Geobacillus kaustophilus (strain HTA426).